The chain runs to 154 residues: Lipoprotein signal peptidase (154 aa).

A run of 2 helical transmembrane segments spans residues 55–75 (GHMWFFYLITVVVIGIIIYIM) and 84–104 (LFSISLAFILGGAIGNFIDRV). Residues aspartate 111 and aspartate 129 contribute to the active site. Residues 124–144 (IFNVADASLSVGVVLMLVYVF) form a helical membrane-spanning segment.

It belongs to the peptidase A8 family.

The protein resides in the cell membrane. The enzyme catalyses Release of signal peptides from bacterial membrane prolipoproteins. Hydrolyzes -Xaa-Yaa-Zaa-|-(S,diacylglyceryl)Cys-, in which Xaa is hydrophobic (preferably Leu), and Yaa (Ala or Ser) and Zaa (Gly or Ala) have small, neutral side chains.. It functions in the pathway protein modification; lipoprotein biosynthesis (signal peptide cleavage). Functionally, this protein specifically catalyzes the removal of signal peptides from prolipoproteins. This chain is Lipoprotein signal peptidase, found in Listeria monocytogenes serovar 1/2a (strain ATCC BAA-679 / EGD-e).